The following is a 571-amino-acid chain: Chaperonin GroEL 1 (571 aa).

ATP-binding positions include 29–32 (TLGP), Lys-50, 86–90 (DGTTT), Gly-416, and Asp-498.

Belongs to the chaperonin (HSP60) family. In terms of assembly, forms a cylinder of 14 subunits composed of two heptameric rings stacked back-to-back. Interacts with the co-chaperonin GroES.

Its subcellular location is the cytoplasm. The catalysed reaction is ATP + H2O + a folded polypeptide = ADP + phosphate + an unfolded polypeptide.. Functionally, together with its co-chaperonin GroES, plays an essential role in assisting protein folding. The GroEL-GroES system forms a nano-cage that allows encapsulation of the non-native substrate proteins and provides a physical environment optimized to promote and accelerate protein folding. The sequence is that of Chaperonin GroEL 1 from Rhodopirellula baltica (strain DSM 10527 / NCIMB 13988 / SH1).